The chain runs to 744 residues: NAD(P)H-quinone oxidoreductase subunit 5, chloroplastic (744 aa).

Transmembrane regions (helical) follow at residues 9–29 (WIIP…LLLF), 40–60 (WAFQ…NLSI), 88–108 (LIDP…IMVL), 125–145 (FAYM…SNLI), 147–167 (IYIF…FWFT), 185–205 (GDFG…SFEF), 219–239 (NEVN…GAIA), 258–278 (TPIS…FLIA), 290–312 (IMNF…ALAQ), 327–347 (LGYM…FHLI), 354–374 (ALLF…VGYS), 396–416 (TAFL…CFWS), 425–445 (WLYS…TAFY), 548–568 (MLFP…LGIP), 608–628 (IFSV…YKPV), and 724–744 (YLFF…FLNF).

Belongs to the complex I subunit 5 family. NDH is composed of at least 16 different subunits, 5 of which are encoded in the nucleus.

It is found in the plastid. The protein resides in the chloroplast thylakoid membrane. The catalysed reaction is a plastoquinone + NADH + (n+1) H(+)(in) = a plastoquinol + NAD(+) + n H(+)(out). It carries out the reaction a plastoquinone + NADPH + (n+1) H(+)(in) = a plastoquinol + NADP(+) + n H(+)(out). In terms of biological role, NDH shuttles electrons from NAD(P)H:plastoquinone, via FMN and iron-sulfur (Fe-S) centers, to quinones in the photosynthetic chain and possibly in a chloroplast respiratory chain. The immediate electron acceptor for the enzyme in this species is believed to be plastoquinone. Couples the redox reaction to proton translocation, and thus conserves the redox energy in a proton gradient. The chain is NAD(P)H-quinone oxidoreductase subunit 5, chloroplastic (ndhF) from Dampiera diversifolia (Blue dampiera).